A 445-amino-acid chain; its full sequence is Glycerophosphocholine choline phosphodiesterase ENPP6 (445 aa).

The signal sequence occupies residues 1-22 (MAGKLGVLLLALVLSLAQPASA). Residues D32, S71, and N92 each coordinate substrate. Residues D32 and S71 each contribute to the Zn(2+) site. Catalysis depends on S71, which acts as the Nucleophile. A Phosphoserine modification is found at S71. N100 and N118 each carry an N-linked (GlcNAc...) asparagine glycan. A disulfide bridge links C142 with C154. D193 serves as a coordination point for substrate. The Zn(2+) site is built by D193, H197, D240, and H241. A substrate-binding site is contributed by H241. Residue N341 is glycosylated (N-linked (GlcNAc...) asparagine). H356 serves as a coordination point for substrate. H356 serves as a coordination point for Zn(2+). N406 carries an N-linked (GlcNAc...) asparagine glycan. S421 carries the GPI-anchor amidated serine lipid modification. Residues 422–445 (SAPGAPPCACALVTVLLVLLAILA) constitute a propeptide, removed in mature form.

The protein belongs to the nucleotide pyrophosphatase/phosphodiesterase family. In terms of assembly, homodimer; disulfide-linked. Homotetramer. Requires Zn(2+) as cofactor.

Its subcellular location is the cell membrane. The catalysed reaction is sn-glycerol 3-phosphocholine + H2O = phosphocholine + glycerol + H(+). The enzyme catalyses a 1-acyl-sn-glycero-3-phosphocholine + H2O = a 1-acyl-sn-glycerol + phosphocholine + H(+). It catalyses the reaction a 1-O-alkyl-sn-glycero-3-phosphocholine + H2O = a 1-O-alkyl-sn-glycerol + phosphocholine + H(+). It carries out the reaction 1-dodecanoyl-sn-glycero-3-phosphocholine + H2O = 1-dodecanoyl-sn-glycerol + phosphocholine + H(+). The catalysed reaction is 1-hexadecanoyl-sn-glycero-3-phosphocholine + H2O = 1-hexadecanoyl-sn-glycerol + phosphocholine + H(+). The enzyme catalyses 1-(5Z,8Z,11Z,14Z-eicosatetraenoyl)-sn-glycero-3-phosphocholine + H2O = 1-(5Z,8Z,11Z,14Z-eicosatetraenoyl)-sn-glycerol + phosphocholine + H(+). It catalyses the reaction 1-tetradecanoyl-sn-glycero-3-phosphocholine + H2O = 1-tetradecanoyl-sn-glycerol + phosphocholine + H(+). It carries out the reaction sphing-4-enine-phosphocholine + H2O = sphing-4-enine + phosphocholine + H(+). The catalysed reaction is 1-(9Z-octadecenoyl)-sn-glycero-3-phosphocholine + H2O = 1-(9Z-octadecenoyl)-sn-glycerol + phosphocholine + H(+). The enzyme catalyses 1-(9Z,12Z)-octadecadienoyl-sn-glycero-3-phosphocholine + H2O = 1-(9Z,12Z-octadecadienoyl)-sn-glycerol + phosphocholine + H(+). It catalyses the reaction glycero-2-phosphocholine + H2O = phosphocholine + glycerol + H(+). Its activity is regulated as follows. Inhibited by EDTA and EGTA in vitro. Functionally, choline-specific glycerophosphodiesterase that hydrolyzes glycerophosphocholine (GPC) and lysophosphatidylcholine (LPC) and contributes to supplying choline to the cells. Has a preference for LPC with short (12:0 and 14:0) or polyunsaturated (18:2 and 20:4) fatty acids. In vitro, hydrolyzes only choline-containing lysophospholipids, such as sphingosylphosphorylcholine (SPC), platelet-activating factor (PAF) and lysoPAF, but not other lysophospholipids. The chain is Glycerophosphocholine choline phosphodiesterase ENPP6 from Bos taurus (Bovine).